Reading from the N-terminus, the 145-residue chain is Protoporphyrinogen IX oxidase (145 aa).

Transmembrane regions (helical) follow at residues L6 to L26, A61 to L81, T83 to A103, and I123 to P143. Heme is bound at residue H12. K88 contacts heme.

It belongs to the HemJ family. Homodimer. Requires heme b as cofactor.

The protein resides in the cell membrane. The enzyme catalyses protoporphyrinogen IX + 3 A = protoporphyrin IX + 3 AH2. It functions in the pathway porphyrin-containing compound metabolism; protoporphyrin-IX biosynthesis; protoporphyrin-IX from protoporphyrinogen-IX: step 1/1. Functionally, catalyzes the oxidation of protoporphyrinogen IX to protoporphyrin IX. Is involved in the biosynthesis of tetrapyrrole molecules like heme. Does not use oxygen or artificial electron acceptors such as menadione or benzoquinone. The sequence is that of Protoporphyrinogen IX oxidase from Rickettsia prowazekii (strain Madrid E).